A 513-amino-acid chain; its full sequence is Activin receptor type-2A (513 aa).

Positions 1–19 are cleaved as a signal peptide; sequence MGAAAKLAFAVFLISCSSG. At 20–135 the chain is on the extracellular side; sequence AILGRSETQE…TSNPVTPKPP (116 aa). Intrachain disulfides connect C30–C60, C50–C78, C85–C104, C91–C103, and C105–C110. Residues N43 and N66 are each glycosylated (N-linked (GlcNAc...) asparagine). Residues 136–161 traverse the membrane as a helical segment; sequence YYNILLYSLVPLMLIAGIVICAFWVY. Residues 162–513 lie on the Cytoplasmic side of the membrane; that stretch reads RHHKMAYPPV…VDFPPKESSL (352 aa). The Protein kinase domain maps to 192–485; that stretch reads LQLLEVKARG…GERITQMQRL (294 aa). Residues 198–206 and K219 contribute to the ATP site; that span reads KARGRFGCV. The active-site Proton acceptor is D322.

This sequence belongs to the protein kinase superfamily. TKL Ser/Thr protein kinase family. TGFB receptor subfamily. As to quaternary structure, part of a complex consisting of MAGI2/ARIP1, ACVR2A, ACVR1B and SMAD3. Interacts with MAGI2/ARIP1. Interacts with type I receptor ACVR1. Interacts with BMP7. Interacts with TSC22D1/TSC-22. Interacts with activin A/INHBA. Mg(2+) is required as a cofactor. Requires Mn(2+) as cofactor.

It is found in the cell membrane. The enzyme catalyses L-threonyl-[receptor-protein] + ATP = O-phospho-L-threonyl-[receptor-protein] + ADP + H(+). It carries out the reaction L-seryl-[receptor-protein] + ATP = O-phospho-L-seryl-[receptor-protein] + ADP + H(+). Functionally, on ligand binding, forms a receptor complex consisting of two type II and two type I transmembrane serine/threonine kinases. Type II receptors phosphorylate and activate type I receptors which autophosphorylate, then bind and activate SMAD transcriptional regulators. Receptor for activin A, activin B and inhibin A. Mediates induction of adipogenesis by GDF6. The polypeptide is Activin receptor type-2A (Homo sapiens (Human)).